Consider the following 739-residue polypeptide: AN1-type zinc finger protein 4 (739 aa).

The region spanning 54-129 is the Ubiquitin-like domain; sequence MELFIETLTG…LKLVLAMRGG (76 aa). Positions 246-255 are enriched in basic residues; that stretch reads KPKKVVKVKP. Disordered regions lie at residues 246–270 and 287–316; these read KPKKVVKVKPRPPLAPRPTSSSTAA and LPSGNAHLPETSRNAGPSPAAQAPADRPVS. Residues 673-720 form an AN1-type zinc finger; it reads KKIMKHCFLCGKKTGLATSFECRCGNNFCASHRYAEAHGCTYDYKSAG. Positions 679, 682, 694, 696, 701, 704, 710, and 712 each coordinate Zn(2+).

This Mus musculus (Mouse) protein is AN1-type zinc finger protein 4 (Zfand4).